Consider the following 276-residue polypeptide: Phospholipid phosphatase 2 (276 aa).

Residues Met1 to Arg4 lie on the Cytoplasmic side of the membrane. The chain crosses the membrane as a helical span at residues Trp5–Leu25. The Lumenal portion of the chain corresponds to Thr26–Thr51. A helical transmembrane segment spans residues Ile52–Gly72. The Cytoplasmic portion of the chain corresponds to Glu73–Asp87. A helical transmembrane segment spans residues Phe88–Val108. Residues Ser109–Leu161 are Lumenal-facing. The phosphatase sequence motif I stretch occupies residues Lys117–Pro125. N-linked (GlcNAc...) asparagine glycans are attached at residues Asn139 and Asn155. The chain crosses the membrane as a helical span at residues Ser162–Val182. Positions Tyr164 to His167 are phosphatase sequence motif II. His167 functions as the Proton donors in the catalytic mechanism. Topologically, residues Gln183–Lys189 are cytoplasmic. A helical membrane pass occupies residues Trp190–Gly210. Residues Tyr211 to Leu225 are Lumenal-facing. Residues Thr212 to Asp223 are phosphatase sequence motif III. Catalysis depends on His219, which acts as the Nucleophile. Residues Val226–Phe246 form a helical membrane-spanning segment. Topologically, residues Lys247 to Pro276 are cytoplasmic. The tract at residues Gln252–Pro276 is disordered.

Belongs to the PA-phosphatase related phosphoesterase family. In terms of assembly, forms functional homodimers and homooligomers. Can also form heterooligomers with PLPP1 and PLPP3. N-glycosylated. In terms of tissue distribution, expressed in the brain.

It is found in the membrane. It localises to the cell membrane. The protein localises to the early endosome membrane. Its subcellular location is the endoplasmic reticulum membrane. It carries out the reaction a 1,2-diacyl-sn-glycero-3-phosphate + H2O = a 1,2-diacyl-sn-glycerol + phosphate. The enzyme catalyses 1,2-dihexadecanoyl-sn-glycero-3-phosphate + H2O = 1,2-dihexadecanoyl-sn-glycerol + phosphate. It catalyses the reaction 1,2-di-(9Z-octadecenoyl)-sn-glycero-3-phosphate + H2O = 1,2-di-(9Z-octadecenoyl)-sn-glycerol + phosphate. The catalysed reaction is a monoacyl-sn-glycero-3-phosphate + H2O = a monoacylglycerol + phosphate. It carries out the reaction (9Z)-octadecenoyl-sn-glycero-3-phosphate + H2O = (9Z-octadecenoyl)-glycerol + phosphate. The enzyme catalyses sphing-4-enine 1-phosphate + H2O = sphing-4-enine + phosphate. It catalyses the reaction an N-acylsphing-4-enine 1-phosphate + H2O = an N-acylsphing-4-enine + phosphate. The catalysed reaction is N-(octanoyl)-sphing-4-enine-1-phosphate + H2O = N-octanoylsphing-4-enine + phosphate. It carries out the reaction N-(9Z-octadecenoyl)-ethanolamine phosphate + H2O = N-(9Z-octadecenoyl) ethanolamine + phosphate. It functions in the pathway lipid metabolism; phospholipid metabolism. With respect to regulation, magnesium-independent phospholipid phosphatase. Insensitive to N-ethylmaleimide. Functionally, magnesium-independent phospholipid phosphatase that catalyzes the dephosphorylation of a variety of glycerolipid and sphingolipid phosphate esters including phosphatidate/PA, lysophosphatidate/LPA, sphingosine 1-phosphate/S1P and ceramide 1-phosphate/C1P. Has no apparent extracellular phosphatase activity and therefore most probably acts intracellularly. Also acts on N-oleoyl ethanolamine phosphate/N-(9Z-octadecenoyl)-ethanolamine phosphate, a potential physiological compound. Through dephosphorylation of these bioactive lipid mediators produces new bioactive compounds and may regulate signal transduction in different cellular processes. Indirectly regulates, for instance, cell cycle G1/S phase transition through its phospholipid phosphatase activity. This chain is Phospholipid phosphatase 2, found in Rattus norvegicus (Rat).